The chain runs to 1373 residues: DNA-directed RNA polymerase subunit beta'' (1373 aa).

Positions 220, 291, 298, and 301 each coordinate Zn(2+).

This sequence belongs to the RNA polymerase beta' chain family. RpoC2 subfamily. As to quaternary structure, in plastids the minimal PEP RNA polymerase catalytic core is composed of four subunits: alpha, beta, beta', and beta''. When a (nuclear-encoded) sigma factor is associated with the core the holoenzyme is formed, which can initiate transcription. Requires Zn(2+) as cofactor.

The protein resides in the plastid. It is found in the chloroplast. The enzyme catalyses RNA(n) + a ribonucleoside 5'-triphosphate = RNA(n+1) + diphosphate. In terms of biological role, DNA-dependent RNA polymerase catalyzes the transcription of DNA into RNA using the four ribonucleoside triphosphates as substrates. The sequence is that of DNA-directed RNA polymerase subunit beta'' from Silene latifolia (White campion).